We begin with the raw amino-acid sequence, 435 residues long: NADH-quinone oxidoreductase subunit D 2 (435 aa).

It belongs to the complex I 49 kDa subunit family. As to quaternary structure, NDH-1 is composed of 14 different subunits. Subunits NuoB, C, D, E, F, and G constitute the peripheral sector of the complex.

The protein localises to the cell inner membrane. The enzyme catalyses a quinone + NADH + 5 H(+)(in) = a quinol + NAD(+) + 4 H(+)(out). NDH-1 shuttles electrons from NADH, via FMN and iron-sulfur (Fe-S) centers, to quinones in the respiratory chain. The immediate electron acceptor for the enzyme in this species is believed to be ubiquinone. Couples the redox reaction to proton translocation (for every two electrons transferred, four hydrogen ions are translocated across the cytoplasmic membrane), and thus conserves the redox energy in a proton gradient. The sequence is that of NADH-quinone oxidoreductase subunit D 2 from Stenotrophomonas maltophilia (strain R551-3).